Reading from the N-terminus, the 332-residue chain is Glycerol-3-phosphate dehydrogenase [NAD(P)+] 2 (332 aa).

Positions 17, 18, 37, and 112 each coordinate NADPH. The sn-glycerol 3-phosphate site is built by lysine 112 and glycine 140. Alanine 144 is an NADPH binding site. Sn-glycerol 3-phosphate-binding residues include lysine 195, aspartate 243, serine 253, arginine 254, and asparagine 255. The active-site Proton acceptor is the lysine 195. Position 254 (arginine 254) interacts with NADPH. The NADPH site is built by valine 278 and glutamate 280.

The protein belongs to the NAD-dependent glycerol-3-phosphate dehydrogenase family.

It is found in the cytoplasm. It catalyses the reaction sn-glycerol 3-phosphate + NAD(+) = dihydroxyacetone phosphate + NADH + H(+). The enzyme catalyses sn-glycerol 3-phosphate + NADP(+) = dihydroxyacetone phosphate + NADPH + H(+). The protein operates within membrane lipid metabolism; glycerophospholipid metabolism. Catalyzes the reduction of the glycolytic intermediate dihydroxyacetone phosphate (DHAP) to sn-glycerol 3-phosphate (G3P), the key precursor for phospholipid synthesis. This Mycolicibacterium paratuberculosis (strain ATCC BAA-968 / K-10) (Mycobacterium paratuberculosis) protein is Glycerol-3-phosphate dehydrogenase [NAD(P)+] 2.